Consider the following 112-residue polypeptide: Urease subunit beta (112 aa).

This sequence belongs to the urease beta subunit family. Heterotrimer of UreA (gamma), UreB (beta) and UreC (alpha) subunits. Three heterotrimers associate to form the active enzyme.

The protein resides in the cytoplasm. The enzyme catalyses urea + 2 H2O + H(+) = hydrogencarbonate + 2 NH4(+). It participates in nitrogen metabolism; urea degradation; CO(2) and NH(3) from urea (urease route): step 1/1. The protein is Urease subunit beta of Polaromonas sp. (strain JS666 / ATCC BAA-500).